The primary structure comprises 316 residues: Probable cell division protein WhiA (316 aa).

The H-T-H motif DNA-binding region spans 275-309 (TLKELGEMVSGGKISKSGINHRLRKIDEIAEKLRA).

Belongs to the WhiA family.

In terms of biological role, involved in cell division and chromosome segregation. This is Probable cell division protein WhiA from Bacillus cytotoxicus (strain DSM 22905 / CIP 110041 / 391-98 / NVH 391-98).